An 814-amino-acid polypeptide reads, in one-letter code: Transcription factor oryO (814 aa).

2 disordered regions span residues 1-59 and 699-723; these read MTAR…PACN and PMDG…SIPP. Composition is skewed to polar residues over residues 16–27 and 49–59; these read ANPTVRDQTQQD and QPDNTSSPACN. A DNA-binding region (zn(2)-C6 fungal-type) is located at residues 58–85; sequence CNQCRTRKIRCDRQQPKCSNCRRADVEC. Residues 713–723 show a composition bias toward low complexity; sequence PSESELSSIPP.

The protein localises to the nucleus. In terms of biological role, transcription factor that regulates the expression of the gene cluster that mediates the biosynthesis of oryzines, natural products with an unusual maleidride backbone. This is Transcription factor oryO from Aspergillus oryzae (strain ATCC 42149 / RIB 40) (Yellow koji mold).